The chain runs to 198 residues: Transmembrane protein 17 (198 aa).

Asn13 carries an N-linked (GlcNAc...) asparagine glycan. The next 4 membrane-spanning stretches (helical) occupy residues 47–67 (LYFN…MLHL), 78–98 (FIVV…LYLG), 110–130 (LAGF…FLLL), and 142–162 (AIHI…FLTL).

This sequence belongs to the TMEM17 family. In terms of assembly, part of the tectonic-like complex (also named B9 complex).

It is found in the cell projection. It localises to the cilium membrane. Its function is as follows. Transmembrane component of the tectonic-like complex, a complex localized at the transition zone of primary cilia and acting as a barrier that prevents diffusion of transmembrane proteins between the cilia and plasma membranes. Required for ciliogenesis and sonic hedgehog/SHH signaling. This chain is Transmembrane protein 17 (Tmem17), found in Mus musculus (Mouse).